The sequence spans 302 residues: uncharacterized protein (302 aa).

The HTH lysR-type domain occupies 1–60; sequence MRMNMSDFATFFAVARNQSFRAAGDELGLSSSAISHSIKTLEQRLKIRLFNRTTRSVSLT. Residues 20 to 40 constitute a DNA-binding region (H-T-H motif); it reads FRAAGDELGLSSSAISHSIKT.

This sequence belongs to the LysR transcriptional regulatory family.

This is an uncharacterized protein from Escherichia coli (strain K12).